The sequence spans 761 residues: Neurotrypsin (761 aa).

Positions 1–21 (MALARCVLAVILGVLSEVARA) are cleaved as a signal peptide. Residues 26-88 (HSPLHRPHPS…PTISRRCGAG (63 aa)) are disordered. The span at 54 to 63 (TPRFPLPPRA) shows a compositional bias: pro residues. The region spanning 85-157 (CGAGEPWGNA…GKVDWGYCDC (73 aa)) is the Kringle domain. 17 disulfide bridges follow: Cys-85/Cys-157, Cys-101/Cys-141, Cys-130/Cys-155, Cys-191/Cys-255, Cys-204/Cys-265, Cys-235/Cys-245, Cys-298/Cys-361, Cys-311/Cys-371, Cys-341/Cys-351, Cys-411/Cys-475, Cys-424/Cys-485, Cys-455/Cys-465, Cys-505/Cys-636, Cys-547/Cys-563, Cys-651/Cys-717, Cys-680/Cys-694, and Cys-707/Cys-736. N-linked (GlcNAc...) asparagine glycosylation is present at Asn-93. SRCR domains lie at 166–267 (IRLV…SCAP), 273–373 (IRLS…TCYP), and 386–487 (IRLM…ICDY). A zymogen activation region region spans residues 505–516 (CGLRLLHRRQKR). In terms of domain architecture, Peptidase S1 spans 517-760 (IIGGNNSLRG…FVPWIKSVTS (244 aa)). Asn-521 carries N-linked (GlcNAc...) asparagine glycosylation. Catalysis depends on His-562, which acts as the Charge relay system. N-linked (GlcNAc...) asparagine glycosylation is present at Asn-569. Asp-612 acts as the Charge relay system in catalysis. Ser-711 functions as the Charge relay system in the catalytic mechanism.

It belongs to the peptidase S1 family.

The protein resides in the secreted. In terms of biological role, plays a role in neuronal plasticity and the proteolytic action may subserve structural reorganizations associated with learning and memory operations. This Rattus norvegicus (Rat) protein is Neurotrypsin (Prss12).